We begin with the raw amino-acid sequence, 895 residues long: Catenin alpha-3 (895 aa).

The stretch at 74-107 (EMIAKEATVLKEELAAALQEVRKESKALKVSAER) forms a coiled coil. Ser160 bears the Phosphoserine mark. A coiled-coil region spans residues 325-379 (RERIIAECNAIRQALQDLLTEYMSNTGKTERSNTLNTAIVNMSKKTRDLRRQLRK). At Thr361 the chain carries Phosphothreonine. A disordered region spans residues 635–660 (DVSDLEDDHEVRSHTSIQTEGKTDRA). Residues Ser637 and Ser647 each carry the phosphoserine modification. Residue Thr649 is modified to Phosphothreonine.

This sequence belongs to the vinculin/alpha-catenin family. Interacts with CTNNB1. Interacts with PKP2. In terms of tissue distribution, expressed in heart (at protein level).

It localises to the cytoplasm. Its subcellular location is the cytoskeleton. It is found in the cell junction. The protein resides in the desmosome. May be involved in formation of stretch-resistant cell-cell adhesion complexes. This is Catenin alpha-3 from Mus musculus (Mouse).